A 1283-amino-acid polypeptide reads, in one-letter code: Oxysterol-binding protein homolog 2 (1283 aa).

Ser2 is modified (N-acetylserine). Ser7 carries the post-translational modification Phosphoserine. ANK repeat units lie at residues 106 to 134 and 206 to 235; these read NGNT…SIND and TGTT…EATV. The PH domain maps to 289–386; that stretch reads PPTYKGFLKK…WVNAIQSAIR (98 aa). Phosphoserine is present on residues Ser422, Ser445, Ser451, Ser455, Ser458, Ser459, and Ser486. Thr488 is modified (phosphothreonine). Polar residues-rich tracts occupy residues 504–518 and 530–551; these read SNTL…SGSG and ANLS…NNYI. Disordered stretches follow at residues 504 to 571 and 702 to 721; these read SNTL…LGIN and TAGN…DTTA. Ser512 and Ser515 each carry phosphoserine. The span at 554–568 shows a compositional bias: acidic residues; sequence FEGDEANSDDEEEDL. Over residues 707–716 the composition is skewed to basic and acidic residues; sequence ESLENDKEQE. Ser717 carries the post-translational modification Phosphoserine. The FFAT motif lies at 745–751; sequence EFYDAAE. The disordered stretch occupies residues 767–834; that stretch reads STAAAPKHAP…SLKNFKAEDK (68 aa). Thr783 carries the phosphothreonine modification. At Ser787 the chain carries Phosphoserine. Basic and acidic residues-rich tracts occupy residues 791-810 and 818-834; these read QDEK…KFEK and DEPK…AEDK. 2 positions are modified to phosphoserine: Ser825 and Ser1151. Residues 897 to 1268 form an OSBP-related domain (ORD) region; that stretch reads SLWAVLKSMV…KYWRYTGKYW (372 aa).

Belongs to the OSBP family. In terms of assembly, interacts with SCS2.

It is found in the cell membrane. The protein localises to the endoplasmic reticulum membrane. Its function is as follows. Lipid transport protein (LTP) involved in non-vesicular transfer of lipids between membranes. Functions in phosphoinositide-coupled directional transport of various lipids by carrying the lipid molecule in a hydrophobic pocket and transferring it between membranes through the cytosol. Involved in maintenance of intracellular sterol distribution and homeostasis. Binds and transports sterol. Plays a role in the positive regulation of vesicular transport of ceramide from the ER to the Golgi, negatively regulating COPII-mediated ER export of cargos. This is Oxysterol-binding protein homolog 2 from Saccharomyces cerevisiae (strain ATCC 204508 / S288c) (Baker's yeast).